Consider the following 178-residue polypeptide: Large ribosomal subunit protein bL25 (178 aa).

The protein belongs to the bacterial ribosomal protein bL25 family. CTC subfamily. Part of the 50S ribosomal subunit; part of the 5S rRNA/L5/L18/L25 subcomplex. Contacts the 5S rRNA. Binds to the 5S rRNA independently of L5 and L18.

Functionally, this is one of the proteins that binds to the 5S RNA in the ribosome where it forms part of the central protuberance. This chain is Large ribosomal subunit protein bL25, found in Campylobacter hominis (strain ATCC BAA-381 / DSM 21671 / CCUG 45161 / LMG 19568 / NCTC 13146 / CH001A).